Consider the following 270-residue polypeptide: Protein-ADP-ribose hydrolase (270 aa).

The region spanning 73-267 (VSVKDCQKTN…LYDTYLQKEN (195 aa)) is the Macro domain. ADP-D-ribose contacts are provided by Asp92, Ile93, and Asn106. Residues Cys112, His117, and Cys119 each coordinate Zn(2+). Residues Cys119, Ile120, Asp121, Ser212, Thr213, Gly214, Glu215, and Phe216 each contribute to the ADP-D-ribose site.

It belongs to the MacroD-type family. Zn-Macro subfamily. As to quaternary structure, monomer. Interacts with the lipoylated form of GcvH-L. The cofactor is Zn(2+).

It carries out the reaction 4-O-(ADP-D-ribosyl)-L-aspartyl-[protein] + H2O = L-aspartyl-[protein] + ADP-D-ribose + H(+). It catalyses the reaction 5-O-(ADP-D-ribosyl)-L-glutamyl-[protein] + H2O = L-glutamyl-[protein] + ADP-D-ribose + H(+). The catalysed reaction is S-(ADP-D-ribosyl)-L-cysteinyl-[protein] + H2O = ADP-D-ribose + L-cysteinyl-[protein]. Its function is as follows. ADP-ribosylhydrolase that specifically reverses the SirTM-mediated mono-ADP-ribosylation at an asparatate residue of GcvH-L (SpyM50867), by releasing ADP-ribose from the target protein. May play a role in the regulation of the response to host-induced oxidative stress. It can also hydrolyze ADP-ribosyl-glutamate bonds and ADP-ribosyl-cysteine bonds. In vitro, it can remove the ADP-ribosyl modification from the human mono-ADP-ribosylated PARP1 E988Q mutant, which is primarily modified on glutamate site with only minor aspartate contribution. It can also hydrolyze the ADP-ribosyl-cysteinyl glycosidic bond of a Cys-ADP-ribosylated synthetic peptide. This chain is Protein-ADP-ribose hydrolase, found in Streptococcus pyogenes serotype M5 (strain Manfredo).